The chain runs to 294 residues: Homeobox-leucine zipper protein ATHB-13 (294 aa).

The segment at residues 82–141 (MGEKKRRLNMEQVKTLEKNFELGNKLEPERKMQLARALGLQPRQIAIWFQNRRARWKTKQ) is a DNA-binding region (homeobox). The segment at 142–177 (LEKDYDTLKRQFDTLKAENDLLQTHNQKLQAEIMGL) is leucine-zipper. Positions 181–246 (EQTESINLNK…FFPPSPATAT (66 aa)) are disordered. Low complexity predominate over residues 197-210 (SNRSDNSSDNLRLD). Positions 214-223 (APPSNDSTLT) are enriched in polar residues.

It belongs to the HD-ZIP homeobox family. Class I subfamily. In terms of tissue distribution, predominantly expressed in leaves and flowers.

Its subcellular location is the nucleus. Its function is as follows. Probable transcription factor that may act in the sucrose-signaling pathway. The protein is Homeobox-leucine zipper protein ATHB-13 (ATHB-13) of Arabidopsis thaliana (Mouse-ear cress).